The sequence spans 124 residues: Small ribosomal subunit protein uS12 (124 aa).

Asp89 carries the post-translational modification 3-methylthioaspartic acid.

This sequence belongs to the universal ribosomal protein uS12 family. In terms of assembly, part of the 30S ribosomal subunit. Contacts proteins S8 and S17. May interact with IF1 in the 30S initiation complex.

Functionally, with S4 and S5 plays an important role in translational accuracy. In terms of biological role, interacts with and stabilizes bases of the 16S rRNA that are involved in tRNA selection in the A site and with the mRNA backbone. Located at the interface of the 30S and 50S subunits, it traverses the body of the 30S subunit contacting proteins on the other side and probably holding the rRNA structure together. The combined cluster of proteins S8, S12 and S17 appears to hold together the shoulder and platform of the 30S subunit. The chain is Small ribosomal subunit protein uS12 from Prochlorococcus marinus (strain SARG / CCMP1375 / SS120).